We begin with the raw amino-acid sequence, 731 residues long: Two pore channel protein 2 (731 aa).

Topologically, residues 1-68 (MAAEEQPLLG…RWYYSNVCQR (68 aa)) are cytoplasmic. The helical transmembrane segment at 69-89 (VLGFIIFLILILAFVEVPSSF) threads the bilayer. Residues 90–111 (TKTADVRYRSQPWQPPCGLTET) lie on the Extracellular side of the membrane. The helical transmembrane segment at 112 to 132 (IEAFCLLAFLVDLSVKGYLVG) threads the bilayer. Residues 133-139 (QAQLQQN) lie on the Cytoplasmic side of the membrane. Residues 140 to 160 (LWLLAYFMVLVVSVVDWIVSL) traverse the membrane as a helical segment. Residues 161 to 167 (SLACEEP) are Extracellular-facing. The helical transmembrane segment at 168-188 (LRMRRLLRPFFLLQNSSMMKK) threads the bilayer. Residues 187–191 (KKTLK) are interaction with phosphatidylinositol 3,5-bisphosphate. At 189-203 (TLKCIRWSLPEMASV) the chain is on the cytoplasmic side. Residues 204–224 (GLLLAIHLCLFTIIGMLLFTI) form a helical membrane-spanning segment. The Extracellular segment spans residues 225–238 (GEKDEAQDQERLAY). The helical; Pore-forming intramembrane region spans 239–263 (FRNLPEALTSLLVLLTTSNNPDVMI). At 264-270 (PAYTQNR) the chain is on the extracellular side. The helical transmembrane segment at 271 to 291 (AFALFFIVFTLIGSLFLMNLL) threads the bilayer. The Cytoplasmic portion of the chain corresponds to 292–417 (TAIIYNQFRG…TAQFIFSHHY (126 aa)). A helical membrane pass occupies residues 418–438 (FDYLGNLVALGNLLSICVFLV). Topologically, residues 439–449 (LDSDLLPGERD) are extracellular. Residues 450-470 (DFVLGILDYIFILYYLLELLF) form a helical membrane-spanning segment. The Cytoplasmic portion of the chain corresponds to 471–486 (KVFALGLPGYLSYHSN). A helical membrane pass occupies residues 487–507 (VFDGLLTIILLVSEICTLAVY). Residues 508–524 (RLPHSGWKPEQYGPLSL) are Extracellular-facing. The chain crosses the membrane as a helical span at residues 525 to 542 (WDMTRLMNTLIVFRFLRI). Over 543 to 564 (IPNIKPMAEVANTILGLIPNLR) the chain is Cytoplasmic. Residues 565 to 585 (AFGGILVVAYYVFAMIGINLF) traverse the membrane as a helical segment. Residues 586–618 (RGVIVPPGNSSLVPDNNSAVCGSFEQLGYWPNN) are Extracellular-facing. N-linked (GlcNAc...) asparagine glycosylation is found at Asn-594 and Asn-601. An intramembrane region (helical; Pore-forming) is located at residues 619–641 (FDDFAAALITLWNVMVVNNWQVI). Residues 642–656 (LEAYKRYAGPWSMVY) lie on the Extracellular side of the membrane. Residues 657 to 677 (FVLWWLVSSVIWINLFLALLL) traverse the membrane as a helical segment. Over 678-731 (ENFLHRWDPQGHKQLLVGTKQMSVELMFRDILEEPKEEELMEKLHKHPHLHLCR) the chain is Cytoplasmic.

This sequence belongs to the calcium channel alpha-1 subunit (TC 1.A.1.11) family. Two pore calcium channel subfamily. In terms of assembly, homodimer. Interacts with LRRK2. Interacts with HAX1. Interacts with MTOR; the interaction is required for TPCN2 ATP sensitivity. Found in a complex with LSM12, TPCN1 and TPCN2. Interacts with LSM12. In terms of processing, N-glycosylated. As to expression, widely expressed. Highly expressed in macrophages. Expressed in pigmented cells.

The protein localises to the late endosome membrane. It localises to the lysosome membrane. It is found in the melanosome membrane. The catalysed reaction is Ca(2+)(in) = Ca(2+)(out). It carries out the reaction Na(+)(in) = Na(+)(out). Its activity is regulated as follows. Regulated by Mg(2+) ions, cytosolic Mg(2+) selectively inhibits outward current while lysosomal Mg(2+) modestly inhibits both the outward and inward currents. In the absence of Mg(2+), NAADP readily activates TPCN2, with properties similar to PI(3,5)P2. Na(+) current is inhibited by ATP in a MTORC-dependent manner. ATP sensitivity is independent of PI(3,5)P2. Both current elicited by PI(3,5)P2 as well as NAADP are inhibited by tetrandrine. Its function is as follows. Intracellular channel initially characterized as a non-selective Ca(2+)-permeable channel activated by NAADP (nicotinic acid adenine dinucleotide phosphate), it is also a highly-selective Na(+) channel activated directly by PI(3,5)P2 (phosphatidylinositol 3,5-bisphosphate). Localizes to the lysosomal and late endosome membranes where it regulates organellar membrane excitability, membrane trafficking, and pH homeostasis. Is associated with a plethora of physiological processes, including mTOR-dependent nutrient sensing, skin pigmentation and autophagy. Ion selectivity is not fixed but rather agonist-dependent and under defined ionic conditions, can be readily activated by both NAADP and PI(3,5)P2. As calcium channel, it increases the pH in the lysosomal lumen, as sodium channel, it promotes lysosomal exocytosis. Plays a crucial role in endolysosomal trafficking in the endolysosomal degradation pathway and is potentially involved in the homeostatic control of many macromolecules and cell metabolites. Also expressed in melanosomes of pigmented cells where mediates a Ca(2+) channel and/or PI(3,5)P2-activated melanosomal Na(+) channel to acidify pH and inhibit tyrosinase activity required for melanogenesis and pigmentation. Unlike the voltage-dependent TPCN1, TPCN2 is voltage independent and can be activated solely by PI(3,5)P2 binding. In contrast, PI(4,5)P2, PI(3,4)P2, PI(3)P and PI(5)P have no obvious effect on channel activation. (Microbial infection) During Ebola virus (EBOV) infection, controls the movement of endosomes containing virus particles and is required by EBOV to escape from the endosomal network into the cell cytoplasm. This is Two pore channel protein 2 from Mus musculus (Mouse).